Here is a 392-residue protein sequence, read N- to C-terminus: tRNA-specific 2-thiouridylase MnmA (392 aa).

ATP-binding positions include 18 to 25 (AMSGGVDS) and Leu-44. The Nucleophile role is filled by Cys-112. Cysteines 112 and 208 form a disulfide. Residue Gly-136 participates in ATP binding. An interaction with tRNA region spans residues 158 to 160 (RDQ). Residue Cys-208 is the Cysteine persulfide intermediate of the active site.

Belongs to the MnmA/TRMU family.

It is found in the cytoplasm. It carries out the reaction S-sulfanyl-L-cysteinyl-[protein] + uridine(34) in tRNA + AH2 + ATP = 2-thiouridine(34) in tRNA + L-cysteinyl-[protein] + A + AMP + diphosphate + H(+). In terms of biological role, catalyzes the 2-thiolation of uridine at the wobble position (U34) of tRNA, leading to the formation of s(2)U34. The protein is tRNA-specific 2-thiouridylase MnmA of Rhodospirillum centenum (strain ATCC 51521 / SW).